A 393-amino-acid polypeptide reads, in one-letter code: Phosphoglycerate kinase (393 aa).

Substrate contacts are provided by residues 21–23, Arg36, 59–62, Arg118, and Arg151; these read DFN and HLGR. Residues Lys201, Glu323, and 349–352 each bind ATP; that span reads GGDS.

The protein belongs to the phosphoglycerate kinase family. As to quaternary structure, monomer.

The protein localises to the cytoplasm. The enzyme catalyses (2R)-3-phosphoglycerate + ATP = (2R)-3-phospho-glyceroyl phosphate + ADP. The protein operates within carbohydrate degradation; glycolysis; pyruvate from D-glyceraldehyde 3-phosphate: step 2/5. The protein is Phosphoglycerate kinase of Moorella thermoacetica (strain ATCC 39073 / JCM 9320).